Reading from the N-terminus, the 351-residue chain is Probable cell division control protein 7 homolog 1 (351 aa).

The region spanning 21–341 (YTPIEKIGEG…ASDALSHPFF (321 aa)) is the Protein kinase domain. ATP-binding positions include 27–35 (IGEGSFSVV) and Lys-50. Residue Asp-137 is the Proton acceptor of the active site.

The protein belongs to the protein kinase superfamily. Ser/Thr protein kinase family. CDC7 subfamily. It depends on Mg(2+) as a cofactor.

It catalyses the reaction L-seryl-[protein] + ATP = O-phospho-L-seryl-[protein] + ADP + H(+). It carries out the reaction L-threonyl-[protein] + ATP = O-phospho-L-threonyl-[protein] + ADP + H(+). Functionally, serine/threonine-protein kinase. Needed for the initiation of DNA synthesis during mitosis as well as for synaptonemal complex formation and commitment to recombination during meiosis. The protein is Probable cell division control protein 7 homolog 1 (CDC7-1) of Encephalitozoon cuniculi (strain GB-M1) (Microsporidian parasite).